Reading from the N-terminus, the 63-residue chain is MPIAQIHILEGRNDEQKETLIREVSEAISRSLDAPLTSVRVIITEMAKGHFGIGGELASKVRR.

The active-site Proton acceptor; via imino nitrogen is proline 2.

It belongs to the 4-oxalocrotonate tautomerase family. Homohexamer.

The enzyme catalyses (2Z,4E)-2-hydroxyhexa-2,4-dienedioate = (3E)-2-oxohex-3-enedioate. Its pathway is xenobiotic degradation; toluene degradation. It participates in xenobiotic degradation; xylene degradation. In terms of biological role, catalyzes the ketonization of 2-hydroxymuconate stereoselectively to yield 2-oxo-3-hexenedioate. This chain is 2-hydroxymuconate tautomerase (xylH), found in Pseudomonas putida (Arthrobacter siderocapsulatus).